The chain runs to 453 residues: Tryptophan biosynthesis protein TrpCF (453 aa).

The segment at 1–257 (MMQTVLAKIV…AAVRRVLLGE (257 aa)) is indole-3-glycerol phosphate synthase. An N-(5'-phosphoribosyl)anthranilate isomerase region spans residues 258–453 (NKVCGLTRGQ…ASVFQTLRAY (196 aa)).

It in the N-terminal section; belongs to the TrpC family. In the C-terminal section; belongs to the TrpF family. Monomer.

It carries out the reaction N-(5-phospho-beta-D-ribosyl)anthranilate = 1-(2-carboxyphenylamino)-1-deoxy-D-ribulose 5-phosphate. The enzyme catalyses 1-(2-carboxyphenylamino)-1-deoxy-D-ribulose 5-phosphate + H(+) = (1S,2R)-1-C-(indol-3-yl)glycerol 3-phosphate + CO2 + H2O. It functions in the pathway amino-acid biosynthesis; L-tryptophan biosynthesis; L-tryptophan from chorismate: step 3/5. Its pathway is amino-acid biosynthesis; L-tryptophan biosynthesis; L-tryptophan from chorismate: step 4/5. Bifunctional enzyme that catalyzes two sequential steps of tryptophan biosynthetic pathway. The first reaction is catalyzed by the isomerase, coded by the TrpF domain; the second reaction is catalyzed by the synthase, coded by the TrpC domain. This chain is Tryptophan biosynthesis protein TrpCF (trpC), found in Escherichia coli (strain K12).